We begin with the raw amino-acid sequence, 293 residues long: Small ribosomal subunit protein uS2 (293 aa).

The disordered stretch occupies residues 219–293 (IASAKPDEPY…WATPKTEDWA (75 aa)).

This sequence belongs to the universal ribosomal protein uS2 family. Component of the small ribosomal subunit. Mature ribosomes consist of a small (40S) and a large (60S) subunit. The 40S subunit contains about 33 different proteins and 1 molecule of RNA (18S). The 60S subunit contains about 49 different proteins and 3 molecules of RNA (28S, 5.8S and 5S). Interacts with ribosomal protein S21.

The protein localises to the cytoplasm. Functionally, required for the assembly and/or stability of the 40S ribosomal subunit. Required for the processing of the 20S rRNA-precursor to mature 18S rRNA in a late step of the maturation of 40S ribosomal subunits. The protein is Small ribosomal subunit protein uS2 of Hydra viridissima (Green hydra).